The following is a 333-amino-acid chain: Tetraacyldisaccharide 4'-kinase (333 aa).

ATP is bound at residue 60-67 (TVGGTGKT).

Belongs to the LpxK family.

It catalyses the reaction a lipid A disaccharide + ATP = a lipid IVA + ADP + H(+). Its pathway is glycolipid biosynthesis; lipid IV(A) biosynthesis; lipid IV(A) from (3R)-3-hydroxytetradecanoyl-[acyl-carrier-protein] and UDP-N-acetyl-alpha-D-glucosamine: step 6/6. Transfers the gamma-phosphate of ATP to the 4'-position of a tetraacyldisaccharide 1-phosphate intermediate (termed DS-1-P) to form tetraacyldisaccharide 1,4'-bis-phosphate (lipid IVA). This chain is Tetraacyldisaccharide 4'-kinase, found in Pseudomonas putida (strain GB-1).